The sequence spans 68 residues: Beta-toxin Im-2 (68 aa).

The LCN-type CS-alpha/beta domain maps to 1–67 (KDGYPMVRAG…VWTYEKNTCK (67 aa)). Cystine bridges form between C15–C66, C19–C40, C26–C47, and C30–C49.

It belongs to the long (4 C-C) scorpion toxin superfamily. Sodium channel inhibitor family. Beta subfamily. In terms of tissue distribution, expressed by the venom gland.

It localises to the secreted. In terms of biological role, beta toxins bind voltage-independently at site-4 of sodium channels (Nav) and shift the voltage of activation toward more negative potentials thereby affecting sodium channel activation and promoting spontaneous and repetitive firing. Is toxic to both insect and mammals. Induces paralysis in Acheta domestica crickets, but does not induce death, whereas intracerebroventricular injection into mice causes immediate death (at a dose of 0.05 ug/g). This is Beta-toxin Im-2 from Isometrus maculatus (Lesser brown scorpion).